The primary structure comprises 38 residues: Beta-defensin 8 (38 aa).

3 cysteine pairs are disulfide-bonded: C7–C36, C14–C29, and C19–C37.

Belongs to the beta-defensin family. Neutrophilic granules.

It is found in the secreted. Its function is as follows. Has bactericidal activity. Active against E.coli ML35 and S.aureus 502A. This Bos taurus (Bovine) protein is Beta-defensin 8 (DEFB8).